Consider the following 265-residue polypeptide: Mlc titration factor A (265 aa).

Zn(2+) contacts are provided by His-111, His-148, His-152, and Glu-211.

It belongs to the MtfA family. In terms of assembly, interacts with Mlc. The cofactor is Zn(2+).

Its subcellular location is the cytoplasm. Its function is as follows. Involved in the modulation of the activity of the glucose-phosphotransferase system (glucose-PTS). Interacts with the transcriptional repressor Mlc, preventing its interaction with DNA and leading to the modulation of expression of genes regulated by Mlc, including ptsG, which encodes the PTS system glucose-specific EIICB component. Shows zinc-dependent metallopeptidase activity. This Escherichia coli O6:K15:H31 (strain 536 / UPEC) protein is Mlc titration factor A.